A 145-amino-acid polypeptide reads, in one-letter code: Large ribosomal subunit protein uL15 (145 aa).

Residues 1–30 (MAHSLRKTRKLRGHVSHGHGRIGKHRKHPG) are compositionally biased toward basic residues. The tract at residues 1-48 (MAHSLRKTRKLRGHVSHGHGRIGKHRKHPGGRGNAGGQHHHRINRDKY) is disordered.

This sequence belongs to the universal ribosomal protein uL15 family. As to quaternary structure, component of the large ribosomal subunit.

It is found in the cytoplasm. The protein resides in the cytosol. The protein localises to the rough endoplasmic reticulum. Its function is as follows. Component of the large ribosomal subunit. The chain is Large ribosomal subunit protein uL15 (rpl-27a) from Oscheius tipulae.